The primary structure comprises 614 residues: MGIIHSLSPDLINQIAAGEVIESTHSILKELIENSIDAGASKIEIATESAGLGRILVSDDGHGITKEDLPLAIKRYATSKIQTFHDLEHLFTFGFRGEALASIASVSRLVIESGTEGNRMAQRVVVEEGKVVSEEEIPFFQGTKIEIKDLFYNTPVRRKFLKTESGEEKKNRTRVQTMALGEPSIGFRYVQNGKEVFHVQKEEPLERVLSIYGENLRDHLLPVHSSRNGMTLRGFISHPDFYKSSRMGQFFFVNNRSVELKFSAQILKRCYGELLPSGAFPYAFLFFDLPREFVDVNVHPQKKEVRFLSEETITGILFQGITEVLRTSTPVEFLEMRRRLSMPIPYHSSADKSQFGGEGMSMGGPGFGFGMAGRGQAVWGSQNEEGNPLLGPSSIEGRAGFSLDGIGAGTNLHLLGDNLTKHNLFVPKKHYGVIFETFILAEAEDGLYIIDQHTAHERIRYEEVLRDLKSKAYKSQSLLTPIRLELTKEEAEEMIAEKHRFSELGITLEPFSGGTILIREVPSYIDPGKETETILDLWERFKSKDPEEKELYDEMAKCVACRSAIKKGDQVSDPIIGELLQRLSYCENPSLCPHGRPTLIKLTRKDLETMFHRI.

The protein belongs to the DNA mismatch repair MutL/HexB family.

In terms of biological role, this protein is involved in the repair of mismatches in DNA. It is required for dam-dependent methyl-directed DNA mismatch repair. May act as a 'molecular matchmaker', a protein that promotes the formation of a stable complex between two or more DNA-binding proteins in an ATP-dependent manner without itself being part of a final effector complex. In Leptospira biflexa serovar Patoc (strain Patoc 1 / ATCC 23582 / Paris), this protein is DNA mismatch repair protein MutL.